A 232-amino-acid chain; its full sequence is Orotidine 5'-phosphate decarboxylase (232 aa).

Substrate contacts are provided by residues Asp13, Lys35, 62 to 71, Thr122, Arg182, Gln191, Gly211, and Arg212; that span reads DLKFHDIPNT. Lys64 acts as the Proton donor in catalysis.

The protein belongs to the OMP decarboxylase family. Type 1 subfamily. As to quaternary structure, homodimer.

It carries out the reaction orotidine 5'-phosphate + H(+) = UMP + CO2. Its pathway is pyrimidine metabolism; UMP biosynthesis via de novo pathway; UMP from orotate: step 2/2. Its function is as follows. Catalyzes the decarboxylation of orotidine 5'-monophosphate (OMP) to uridine 5'-monophosphate (UMP). This chain is Orotidine 5'-phosphate decarboxylase, found in Pseudomonas fluorescens (strain Pf0-1).